The following is an 80-amino-acid chain: Exodeoxyribonuclease 7 small subunit (80 aa).

The protein belongs to the XseB family. Heterooligomer composed of large and small subunits.

Its subcellular location is the cytoplasm. It catalyses the reaction Exonucleolytic cleavage in either 5'- to 3'- or 3'- to 5'-direction to yield nucleoside 5'-phosphates.. In terms of biological role, bidirectionally degrades single-stranded DNA into large acid-insoluble oligonucleotides, which are then degraded further into small acid-soluble oligonucleotides. This Pseudomonas aeruginosa (strain LESB58) protein is Exodeoxyribonuclease 7 small subunit.